Reading from the N-terminus, the 298-residue chain is GTP cyclohydrolase FolE2 (298 aa).

This sequence belongs to the GTP cyclohydrolase IV family.

It carries out the reaction GTP + H2O = 7,8-dihydroneopterin 3'-triphosphate + formate + H(+). It functions in the pathway cofactor biosynthesis; 7,8-dihydroneopterin triphosphate biosynthesis; 7,8-dihydroneopterin triphosphate from GTP: step 1/1. Converts GTP to 7,8-dihydroneopterin triphosphate. The chain is GTP cyclohydrolase FolE2 from Neisseria meningitidis serogroup A / serotype 4A (strain DSM 15465 / Z2491).